The sequence spans 251 residues: Cell division protein ZapD (251 aa).

It belongs to the ZapD family. As to quaternary structure, interacts with FtsZ.

The protein localises to the cytoplasm. Cell division factor that enhances FtsZ-ring assembly. Directly interacts with FtsZ and promotes bundling of FtsZ protofilaments, with a reduction in FtsZ GTPase activity. This is Cell division protein ZapD from Burkholderia multivorans (strain ATCC 17616 / 249).